A 339-amino-acid polypeptide reads, in one-letter code: Casein kinase II subunit alpha' (339 aa).

One can recognise a Protein kinase domain in the interval 50 to 334; it reads YEIINKIGRG…AKEAMDHKFF (285 aa). Residues 56–64 and Lys-79 each bind ATP; that span reads IGRGKYSEV. Asp-167 acts as the Proton acceptor in catalysis.

Belongs to the protein kinase superfamily. Ser/Thr protein kinase family. CK2 subfamily. In terms of assembly, tetramer composed of an alpha chain, an alpha', one beta chain and one beta' chain. Interacts with FACT subunits POB3 and SPT16. Interacts with NAP1. Interacts with YTA7.

The catalysed reaction is L-seryl-[protein] + ATP = O-phospho-L-seryl-[protein] + ADP + H(+). It catalyses the reaction L-threonyl-[protein] + ATP = O-phospho-L-threonyl-[protein] + ADP + H(+). Catalytic subunit of a constitutively active serine/threonine-protein kinase complex that phosphorylates a large number of substrates containing acidic residues C-terminal to the phosphorylated serine or threonine. Phosphorylates YTA7 during S-phase to promote transcription of histones. The chain is Casein kinase II subunit alpha' from Saccharomyces cerevisiae (strain ATCC 204508 / S288c) (Baker's yeast).